The sequence spans 655 residues: Chaperone protein dnaK1 (655 aa).

Threonine 197 carries the post-translational modification Phosphothreonine; by autocatalysis.

The protein belongs to the heat shock protein 70 family.

Acts as a chaperone. This chain is Chaperone protein dnaK1 (dnaK1), found in Synechococcus elongatus (strain ATCC 33912 / PCC 7942 / FACHB-805) (Anacystis nidulans R2).